The following is a 329-amino-acid chain: Biotin synthase (329 aa).

Residues 38–262 (NTIQVSTLLS…IMPHSYIRLS (225 aa)) form the Radical SAM core domain. Positions 53, 57, and 60 each coordinate [4Fe-4S] cluster. Positions 97, 128, 188, and 260 each coordinate [2Fe-2S] cluster.

This sequence belongs to the radical SAM superfamily. Biotin synthase family. In terms of assembly, homodimer. It depends on [4Fe-4S] cluster as a cofactor. [2Fe-2S] cluster is required as a cofactor.

It catalyses the reaction (4R,5S)-dethiobiotin + (sulfur carrier)-SH + 2 reduced [2Fe-2S]-[ferredoxin] + 2 S-adenosyl-L-methionine = (sulfur carrier)-H + biotin + 2 5'-deoxyadenosine + 2 L-methionine + 2 oxidized [2Fe-2S]-[ferredoxin]. It participates in cofactor biosynthesis; biotin biosynthesis; biotin from 7,8-diaminononanoate: step 2/2. In terms of biological role, catalyzes the conversion of dethiobiotin (DTB) to biotin by the insertion of a sulfur atom into dethiobiotin via a radical-based mechanism. The chain is Biotin synthase from Acinetobacter calcoaceticus.